The chain runs to 310 residues: Upstream stimulatory factor 1 (310 aa).

Positions 1–17 (MKGQQKTAETEEGTVQI) are enriched in polar residues. Disordered regions lie at residues 1 to 26 (MKGQ…ATGE) and 171 to 209 (QGGS…EVER). Basic and acidic residues predominate over residues 194–209 (TTRDEKRRAQHNEVER). Residues 199-254 (KRRAQHNEVERRRRDKINNWIVQLSKIIPDCSMESTKSGQSKGGILSKACDYIQEL) enclose the bHLH domain. A leucine-zipper region spans residues 271-292 (LQLDNDVLRQQVEDLKNKNLLL). Residue Lys-306 forms a Glycyl lysine isopeptide (Lys-Gly) (interchain with G-Cter in SUMO2) linkage.

Efficient DNA binding requires dimerization with another bHLH protein. Binds DNA as a homodimer or a heterodimer (USF1/USF2).

It is found in the nucleus. Functionally, transcription factor that binds to a symmetrical DNA sequence (E-boxes) (5'-CACGTG-3') that is found in a variety of viral and cellular promoters. Regulates the expression of the surfactant protein-A (SP-A) gene. This Oryctolagus cuniculus (Rabbit) protein is Upstream stimulatory factor 1 (USF1).